A 167-amino-acid polypeptide reads, in one-letter code: 2-C-methyl-D-erythritol 2,4-cyclodiphosphate synthase (167 aa).

Residues Asp15 and His17 each coordinate a divalent metal cation. Residues 15–17 (DIH) and 43–44 (HS) contribute to the 4-CDP-2-C-methyl-D-erythritol 2-phosphate site. An a divalent metal cation-binding site is contributed by His51. Residues 65 to 67 (DIG), 141 to 144 (TTNE), and Arg151 each bind 4-CDP-2-C-methyl-D-erythritol 2-phosphate.

It belongs to the IspF family. As to quaternary structure, homotrimer. A divalent metal cation is required as a cofactor.

The catalysed reaction is 4-CDP-2-C-methyl-D-erythritol 2-phosphate = 2-C-methyl-D-erythritol 2,4-cyclic diphosphate + CMP. It functions in the pathway isoprenoid biosynthesis; isopentenyl diphosphate biosynthesis via DXP pathway; isopentenyl diphosphate from 1-deoxy-D-xylulose 5-phosphate: step 4/6. In terms of biological role, involved in the biosynthesis of isopentenyl diphosphate (IPP) and dimethylallyl diphosphate (DMAPP), two major building blocks of isoprenoid compounds. Catalyzes the conversion of 4-diphosphocytidyl-2-C-methyl-D-erythritol 2-phosphate (CDP-ME2P) to 2-C-methyl-D-erythritol 2,4-cyclodiphosphate (ME-CPP) with a corresponding release of cytidine 5-monophosphate (CMP). In Prochlorococcus marinus (strain MIT 9312), this protein is 2-C-methyl-D-erythritol 2,4-cyclodiphosphate synthase.